The sequence spans 259 residues: MLFVLDAGNTNIVLGIYKGKELVLECRLGTDAKRTADEYGIQVLKLLSHNNIDPKDIEGVIISSVVPNIMYSIEHMIRKYFKIDPIVVGPGVKTGINIKYDNPKSVGADRIVNAVAAHALFEKPLVIIDFGTATTYCAVTKKGDYLGGAICPGIKISAAALFEKAAKLPRIELIKPPHVICKNTVSSMQAGIVYGYIGQVDYIVSKIKEEMIALGEGEPYVIATGGFAGLISEESKTIDEVCPFLTLEGLRVIYEKNKE.

6 to 13 (DAGNTNIV) contacts ATP. Substrate contacts are provided by residues Y100 and 107 to 110 (GADR). D109 acts as the Proton acceptor in catalysis. Residue D129 coordinates K(+). T132 is a binding site for ATP. A substrate-binding site is contributed by T184.

It belongs to the type III pantothenate kinase family. In terms of assembly, homodimer. It depends on NH4(+) as a cofactor. Requires K(+) as cofactor.

The protein localises to the cytoplasm. It catalyses the reaction (R)-pantothenate + ATP = (R)-4'-phosphopantothenate + ADP + H(+). The protein operates within cofactor biosynthesis; coenzyme A biosynthesis; CoA from (R)-pantothenate: step 1/5. Functionally, catalyzes the phosphorylation of pantothenate (Pan), the first step in CoA biosynthesis. In Clostridium novyi (strain NT), this protein is Type III pantothenate kinase.